Here is a 496-residue protein sequence, read N- to C-terminus: Glutamate--cysteine ligase B, chloroplastic (496 aa).

Residues 1–34 constitute a chloroplast transit peptide; sequence MAVASRLAVARVAPDGGAAGRRRRRRGRPVVAVP. Positions 14-53 are disordered; that stretch reads PDGGAAGRRRRRRGRPVVAVPTAAGRGRGRGGAVAASPPT. Over residues 29–38 the composition is skewed to low complexity; sequence PVVAVPTAAG. A disulfide bridge links Cys-160 with Cys-380.

It belongs to the carboxylate-amine ligase family. Glutamate--cysteine ligase type 2 subfamily. As to quaternary structure, homodimer or monomer when oxidized or reduced, respectively. In terms of processing, the Cys-160-Cys-380 disulfide bridge is known to modulate the enzyme activity according to the redox status. The oxidized form constitutes the active enzyme.

The protein resides in the plastid. It localises to the chloroplast. The catalysed reaction is L-cysteine + L-glutamate + ATP = gamma-L-glutamyl-L-cysteine + ADP + phosphate + H(+). Its pathway is sulfur metabolism; glutathione biosynthesis; glutathione from L-cysteine and L-glutamate: step 1/2. The protein is Glutamate--cysteine ligase B, chloroplastic (GSH1-2) of Oryza sativa subsp. japonica (Rice).